Consider the following 471-residue polypeptide: Protein translocase subunit SecF (471 aa).

Positions 1 to 29 are disordered; the sequence is MVSRAKVGAETTKGIDEPDRNDNTDDNGA. The span at 13-23 shows a compositional bias: basic and acidic residues; that stretch reads KGIDEPDRNDN. 6 helical membrane passes run 88–108, 211–231, 242–262, 267–287, 325–345, and 355–375; these read GGVIVAVAVLSIIVRGFTFGI, ITKKVVIALVVFLVLVGLYIT, ALTTMCFDLTVTAGVYSLVGF, ATVIGLLTILGFSLYDTVIVF, LISVLPVLALMVVAVWLLGVG, and LVGIIVGTYSSIFFATPLLVT. The segment at 393–471 is disordered; sequence RRTLGSQVGK…TGKRNNVGRR (79 aa). A compositionally biased stretch (polar residues) spans 415 to 431; the sequence is KPQNQAESCADASSQEG. Low complexity predominate over residues 448-460; sequence PGVRPVRPTGTRR. Positions 461-471 are enriched in basic residues; it reads PTGKRNNVGRR.

This sequence belongs to the SecD/SecF family. SecF subfamily. As to quaternary structure, forms a complex with SecD. Part of the essential Sec protein translocation apparatus which comprises SecA, SecYEG and auxiliary proteins SecDF. Other proteins may also be involved.

The protein localises to the cell membrane. Its function is as follows. Part of the Sec protein translocase complex. Interacts with the SecYEG preprotein conducting channel. SecDF uses the proton motive force (PMF) to complete protein translocation after the ATP-dependent function of SecA. The sequence is that of Protein translocase subunit SecF from Mycobacterium leprae (strain TN).